A 484-amino-acid polypeptide reads, in one-letter code: AMP nucleosidase (484 aa).

It belongs to the AMP nucleosidase family.

The catalysed reaction is AMP + H2O = adenine + D-ribose 5-phosphate. Functionally, catalyzes the hydrolysis of the N-glycosidic bond of AMP to form adenine and ribose 5-phosphate. Involved in regulation of AMP concentrations. The polypeptide is AMP nucleosidase (Escherichia coli O157:H7).